A 123-amino-acid polypeptide reads, in one-letter code: Venom peptide MmKTx1 (123 aa).

Residues 1 to 21 form the signal peptide; the sequence is MSIKISAIALFMLSFTVFVNG.

The protein belongs to the scorpion La1-like peptide family. Post-translationally, contains 4 disulfide bonds. As to expression, expressed by the venom gland.

It is found in the secreted. The sequence is that of Venom peptide MmKTx1 from Olivierus martensii (Manchurian scorpion).